The chain runs to 97 residues: Putative membrane protein insertion efficiency factor (97 aa).

Positions Val72–Gln97 are disordered.

It belongs to the UPF0161 family.

It localises to the cell inner membrane. Its function is as follows. Could be involved in insertion of integral membrane proteins into the membrane. The polypeptide is Putative membrane protein insertion efficiency factor (Alcanivorax borkumensis (strain ATCC 700651 / DSM 11573 / NCIMB 13689 / SK2)).